Consider the following 1057-residue polypeptide: Carbamoyl phosphate synthase large chain (1057 aa).

The interval 1–401 (MPKNKDINTI…SLLKAIRSLE (401 aa)) is carboxyphosphate synthetic domain. 12 residues coordinate ATP: Arg-129, Arg-169, Gly-175, Gly-176, Lys-208, Ile-210, Glu-215, Gly-241, Ile-242, His-243, Gln-284, and Glu-298. Residues 133–327 (RSLMNELDVP…IAKLAAKIAV (195 aa)) enclose the ATP-grasp 1 domain. Positions 284, 298, and 300 each coordinate Mg(2+). Residues Gln-284, Glu-298, and Asn-300 each contribute to the Mn(2+) site. The interval 402-546 (YGVHHLGLPN…YGTYERDNES (145 aa)) is oligomerization domain. A carbamoyl phosphate synthetic domain region spans residues 547–929 (VVTDKEKVIV…ALFKGLTASG (383 aa)). Positions 671 to 861 (EALLNKIDVP…MAQLAMRAIL (191 aa)) constitute an ATP-grasp 2 domain. The ATP site is built by Arg-707, Arg-746, Leu-748, Glu-752, Gly-777, Val-778, His-779, Ser-780, Gln-820, and Glu-832. Residues Gln-820, Glu-832, and Asn-834 each coordinate Mg(2+). Residues Gln-820, Glu-832, and Asn-834 each contribute to the Mn(2+) site. The MGS-like domain maps to 930 to 1057 (VEVKDHGTVL…ESMSFTMKQM (128 aa)). An allosteric domain region spans residues 930–1057 (VEVKDHGTVL…ESMSFTMKQM (128 aa)).

This sequence belongs to the CarB family. Composed of two chains; the small (or glutamine) chain promotes the hydrolysis of glutamine to ammonia, which is used by the large (or ammonia) chain to synthesize carbamoyl phosphate. Tetramer of heterodimers (alpha,beta)4. It depends on Mg(2+) as a cofactor. Requires Mn(2+) as cofactor.

The catalysed reaction is hydrogencarbonate + L-glutamine + 2 ATP + H2O = carbamoyl phosphate + L-glutamate + 2 ADP + phosphate + 2 H(+). The enzyme catalyses hydrogencarbonate + NH4(+) + 2 ATP = carbamoyl phosphate + 2 ADP + phosphate + 2 H(+). Its pathway is amino-acid biosynthesis; L-arginine biosynthesis; carbamoyl phosphate from bicarbonate: step 1/1. It functions in the pathway pyrimidine metabolism; UMP biosynthesis via de novo pathway; (S)-dihydroorotate from bicarbonate: step 1/3. Large subunit of the glutamine-dependent carbamoyl phosphate synthetase (CPSase). CPSase catalyzes the formation of carbamoyl phosphate from the ammonia moiety of glutamine, carbonate, and phosphate donated by ATP, constituting the first step of 2 biosynthetic pathways, one leading to arginine and/or urea and the other to pyrimidine nucleotides. The large subunit (synthetase) binds the substrates ammonia (free or transferred from glutamine from the small subunit), hydrogencarbonate and ATP and carries out an ATP-coupled ligase reaction, activating hydrogencarbonate by forming carboxy phosphate which reacts with ammonia to form carbamoyl phosphate. This is Carbamoyl phosphate synthase large chain from Staphylococcus carnosus (strain TM300).